The chain runs to 91 residues: Non-specific lipid-transfer protein 1 (91 aa).

4 disulfides stabilise this stretch: Cys4–Cys51, Cys14–Cys28, Cys29–Cys74, and Cys49–Cys88.

As to expression, expressed in seeds (at protein level).

Its function is as follows. Plant non-specific lipid-transfer proteins transfer phospholipids as well as galactolipids across membranes. May play a role in wax or cutin deposition in the cell walls of expanding epidermal cells and certain secretory tissues. Binds to both saturated and unsaturated lipids, with the highest binding efficiency for linoleic acid, followed by linolenic acid. This is Non-specific lipid-transfer protein 1 from Foeniculum vulgare (Fennel).